Here is a 311-residue protein sequence, read N- to C-terminus: Transcription factor MafB (311 aa).

Disordered stretches follow at residues 35-78 (PLGR…PTEQ) and 150-199 (EDLA…EDRF). Residues 54–76 (SVSSTPISTPCSSVPSSPSFSPT) show a composition bias toward low complexity. Residues 157 to 167 (HPHHHHHHHHQ) show a composition bias toward basic residues. The span at 168–194 (ASPTPSTSSSSSQQLQTSHQQHPPSSS) shows a compositional bias: low complexity. Residues 226–251 (RLKQKRRTLKNRGYAQSCRYKRVQQK) form a basic motif region. A bZIP domain is found at 226–289 (RLKQKRRTLK…DAYKLKCEKL (64 aa)). The interval 254–275 (LENEKTQLIQQVEQLKQEVTRL) is leucine-zipper.

This sequence belongs to the bZIP family. Maf subfamily. As to quaternary structure, homodimer or heterodimer with other bHLH-Zip transcription factors. Binds DNA as a homodimer or heterodimer. Self-associates; the interaction requires the intact MAFB leucine-zipper domain. Interacts with FOS, HOXD12 and PRRX1. In terms of tissue distribution, expressed in brain, thymus, gut, lung, mesenterium, spleen, kidney, ovary and bursa.

The protein localises to the nucleus. Its function is as follows. Acts as a transcriptional activator or repressor. Positively regulates the expression of alpha-A crystallin genes during lens fiber cell differentiation. Binds to Maf recognition elements (MARE). The protein is Transcription factor MafB (MAFB) of Gallus gallus (Chicken).